The sequence spans 150 residues: Lymphotoxin-beta (150 aa).

Residues 1-149 form the THD domain; the sequence is AWITGQGLGW…GKTFFGAVMV (149 aa). An N-linked (GlcNAc...) asparagine glycan is attached at N128.

The protein belongs to the tumor necrosis factor family. As to quaternary structure, heterotrimer of either two LTB and one LTA subunits or (less prevalent) two LTA and one LTB subunits.

It is found in the membrane. In terms of biological role, cytokine that binds to LTBR/TNFRSF3. May play a specific role in immune response regulation. Provides the membrane anchor for the attachment of the heterotrimeric complex to the cell surface. This Sus scrofa (Pig) protein is Lymphotoxin-beta (LTB).